Here is a 440-residue protein sequence, read N- to C-terminus: GTPase Der (440 aa).

2 EngA-type G domains span residues 3–167 (PIIA…PYDR) and 176–351 (TRIA…EQYC). Residues 9–16 (GRPNVGKS), 56–60 (DTGGF), 119–122 (NKVD), 182–189 (GRPNVGKS), 229–233 (DTAGI), and 294–297 (NKWD) contribute to the GTP site. Positions 352–436 (KRVTTGELNR…PLKLIFRGRD (85 aa)) constitute a KH-like domain.

This sequence belongs to the TRAFAC class TrmE-Era-EngA-EngB-Septin-like GTPase superfamily. EngA (Der) GTPase family. As to quaternary structure, associates with the 50S ribosomal subunit.

In terms of biological role, GTPase that plays an essential role in the late steps of ribosome biogenesis. This is GTPase Der from Citrifermentans bemidjiense (strain ATCC BAA-1014 / DSM 16622 / JCM 12645 / Bem) (Geobacter bemidjiensis).